Consider the following 512-residue polypeptide: Maturase K (512 aa).

The protein belongs to the intron maturase 2 family. MatK subfamily.

The protein localises to the plastid. It localises to the chloroplast. Its function is as follows. Usually encoded in the trnK tRNA gene intron. Probably assists in splicing its own and other chloroplast group II introns. This chain is Maturase K, found in Acer campestre (Field maple).